The chain runs to 486 residues: Glutamyl-tRNA(Gln) amidotransferase subunit A (486 aa).

Active-site charge relay system residues include Lys-77 and Ser-152. Ser-176 (acyl-ester intermediate) is an active-site residue.

Belongs to the amidase family. GatA subfamily. Heterotrimer of A, B and C subunits.

The catalysed reaction is L-glutamyl-tRNA(Gln) + L-glutamine + ATP + H2O = L-glutaminyl-tRNA(Gln) + L-glutamate + ADP + phosphate + H(+). Its function is as follows. Allows the formation of correctly charged Gln-tRNA(Gln) through the transamidation of misacylated Glu-tRNA(Gln) in organisms which lack glutaminyl-tRNA synthetase. The reaction takes place in the presence of glutamine and ATP through an activated gamma-phospho-Glu-tRNA(Gln). The chain is Glutamyl-tRNA(Gln) amidotransferase subunit A from Pediococcus pentosaceus (strain ATCC 25745 / CCUG 21536 / LMG 10740 / 183-1w).